Here is a 225-residue protein sequence, read N- to C-terminus: UPF0128 protein PH1314 (225 aa).

It belongs to the UPF0128 family.

The protein is UPF0128 protein PH1314 of Pyrococcus horikoshii (strain ATCC 700860 / DSM 12428 / JCM 9974 / NBRC 100139 / OT-3).